The chain runs to 27 residues: CD59 glycoprotein (27 aa).

Intrachain disulfides connect Cys3/Cys25 and Cys6/Cys12. Asn17 carries N-linked (GlcNAc...) asparagine glycosylation.

In terms of assembly, interacts with T-cell surface antigen CD2. In terms of processing, N- and O-glycosylated. As to expression, expressed in erythrocytes and lymphocytes. Not detected in platelets.

The protein localises to the cell membrane. Its subcellular location is the secreted. Functionally, potent inhibitor of the complement membrane attack complex (MAC) action, which protects self-cells from damage during complement activation. Acts by binding to the beta-haipins of C8 (C8A and C8B) components of the assembling MAC, forming an intermolecular beta-sheet that prevents incorporation of the multiple copies of C9 required for complete formation of the osmolytic pore. The chain is CD59 glycoprotein from Ovis aries (Sheep).